The primary structure comprises 263 residues: 3-deoxy-manno-octulosonate cytidylyltransferase (263 aa).

This sequence belongs to the KdsB family.

It is found in the cytoplasm. It carries out the reaction 3-deoxy-alpha-D-manno-oct-2-ulosonate + CTP = CMP-3-deoxy-beta-D-manno-octulosonate + diphosphate. It functions in the pathway nucleotide-sugar biosynthesis; CMP-3-deoxy-D-manno-octulosonate biosynthesis; CMP-3-deoxy-D-manno-octulosonate from 3-deoxy-D-manno-octulosonate and CTP: step 1/1. It participates in bacterial outer membrane biogenesis; lipopolysaccharide biosynthesis. Activates KDO (a required 8-carbon sugar) for incorporation into bacterial lipopolysaccharide in Gram-negative bacteria. This Burkholderia multivorans (strain ATCC 17616 / 249) protein is 3-deoxy-manno-octulosonate cytidylyltransferase.